The primary structure comprises 332 residues: Formamidase (332 aa).

The CN hydrolase domain maps to 14–259; the sequence is FLTALIQYPV…WEIVTAEVYP (246 aa). The Proton acceptor role is filled by E60. The Proton donor role is filled by K132. Residue C165 is the Nucleophile of the active site.

The protein belongs to the carbon-nitrogen hydrolase superfamily. Aliphatic amidase family.

The enzyme catalyses formamide + H2O = formate + NH4(+). In terms of biological role, is an aliphatic amidase with a restricted substrate specificity, as it only hydrolyzes formamide. The polypeptide is Formamidase (Bacillus cereus (strain G9842)).